The chain runs to 385 residues: 1-deoxy-D-xylulose 5-phosphate reductoisomerase (385 aa).

T11, G12, S13, I14, Q39, and N117 together coordinate NADPH. Position 118 (K118) interacts with 1-deoxy-D-xylulose 5-phosphate. E119 lines the NADPH pocket. D143 serves as a coordination point for Mn(2+). Residues S144, E145, S170, and H193 each contribute to the 1-deoxy-D-xylulose 5-phosphate site. E145 contacts Mn(2+). NADPH is bound at residue G199. 1-deoxy-D-xylulose 5-phosphate is bound by residues S206, N211, K212, and E215. E215 contacts Mn(2+).

Belongs to the DXR family. Mg(2+) is required as a cofactor. The cofactor is Mn(2+).

The enzyme catalyses 2-C-methyl-D-erythritol 4-phosphate + NADP(+) = 1-deoxy-D-xylulose 5-phosphate + NADPH + H(+). Its pathway is isoprenoid biosynthesis; isopentenyl diphosphate biosynthesis via DXP pathway; isopentenyl diphosphate from 1-deoxy-D-xylulose 5-phosphate: step 1/6. In terms of biological role, catalyzes the NADPH-dependent rearrangement and reduction of 1-deoxy-D-xylulose-5-phosphate (DXP) to 2-C-methyl-D-erythritol 4-phosphate (MEP). The sequence is that of 1-deoxy-D-xylulose 5-phosphate reductoisomerase from Thermomicrobium roseum (strain ATCC 27502 / DSM 5159 / P-2).